A 107-amino-acid polypeptide reads, in one-letter code: Potassium voltage-gated channel subfamily E member 3 (107 aa).

3 N-linked (GlcNAc...) asparagine glycosylation sites follow: N5, N22, and N45. Residues 31–54 are disordered; that stretch reads CRPGPGPGSGTGPDNQTEDHRASL. The chain crosses the membrane as a helical span at residues 61–81; the sequence is SYMYILFVMFLFAVTVGSLIL. The interaction with KCNQ1 stretch occupies residues 72–83; it reads FAVTVGSLILGY. Residues 82-103 lie on the Cytoplasmic side of the membrane; it reads GYTRSRKVDKRSDPYHVYIKNR.

Belongs to the potassium channel KCNE family. Interacts with KCNB1. Interacts with KCNC2. Associates with KCNC4/Kv3.4. Interacts with KCNQ1; associates with a KCNQ1:KCNE3 stoichiometry of 4:4; produces a current with nearly instantaneous activation with a linear current-voltage relationship and alters membrane raft localization; affects KCNQ1 structure and gating properties.

It localises to the cell membrane. The protein localises to the cytoplasm. The protein resides in the perikaryon. It is found in the cell projection. Its subcellular location is the dendrite. It localises to the membrane raft. In terms of biological role, ancillary protein that functions as a regulatory subunit of the voltage-gated potassium (Kv) channel complex composed of pore-forming and potassium-conducting alpha subunits and of regulatory beta subunits. KCNE3 beta subunit modulates the gating kinetics and enhances stability of the channel complex. Alters the gating of the delayed rectifier Kv channel containing KCNB1 alpha subunit. Associates with KCNC4/Kv3.4 alpha subunit to form the subthreshold Kv channel in skeletal muscle and to establish the resting membrane potential (RMP) in muscle cells. Association with KCNQ1/KCLQT1 alpha subunit may form the intestinal cAMP-stimulated potassium channel involved in chloride secretion that produces a current with nearly instantaneous activation with a linear current-voltage relationship. In Rattus norvegicus (Rat), this protein is Potassium voltage-gated channel subfamily E member 3.